Consider the following 86-residue polypeptide: Trypsin inhibitor (86 aa).

2 cysteine pairs are disulfide-bonded: Cys-8–Cys-65 and Cys-49–Cys-58.

Serine protease inhibitor which is active against trypsin. Displays strong antifungal activity against a number of phytopathogenic fungi including M.melonis, A.cucumerina, A.solani, C.glaeosporioides and P.capsici. The sequence is that of Trypsin inhibitor from Fagopyrum tataricum (Tartarian buckwheat).